The following is a 757-amino-acid chain: MDVNPTLLFLKVPAQNAISTTFPYTGDPPYSHGTGTGYTMDTVNRTHQYSERGRWTKNTETGAPQLNPIDGPLPKDNEPSGYAQTDCVLEAMAFLEESHPGIFENSCIETMEVVQQTRVDKLTQGRQTYDWTLNRNQPAATALANTIEVFRSNGLKANESGRLIDFLKDVMESMDREEVEITTHFQRKRRVRDNVTKKMVTQRTIGKKKHRLNKRSYLIRALTLNTMTKDAERGKLKRRAIATPGMQIRGFVYFVETLARSICEKLEQSGLPVGGNEKKAKLANVVRKMMTNSQDTEISFTITGDNTKWNENQNPRMFLAMITYITRNQPEWFRNILSIAPIMFSNKMARLGKGYMFESKSMKLRTQIPAEMLANIDLKYFNDSTRKKIEKIRPLLIDGTASLSPGMMMGMFNMLSTVLGVSILNLGQKRYTKTTYWWDGLQSSDDFALIVNAPNYAGIQAGVDRFYRTCKLLGINMSKKKSYMNRTGTFEFTSFFYRYGFVANFSMELPSFGVSGINESADMSIGVTVIKNNMINNDLGPATAQMALQLFIKDYRYTYRCHRGDTQIQTRRSFEIKKLWDQTRSKAGLLVSDGGPNLYNIRNLHIPEVCLKWELMDEDYQGRLCNPLNPFVSHKEIESVNNAVMMPAHGPAKNMEYDAVATTHSWVPKRNRSILNTSQRGILEDEQMYQRCCNLFEKFFPSSSYRRPVGISSMVEAMVSRARIDARIDFESGRIKKEEFTEIMKTCSTIEELRRQK.

The tract at residues 53-82 is disordered; that stretch reads GRWTKNTETGAPQLNPIDGPLPKDNEPSGY. Short sequence motifs (nuclear localization signal) lie at residues 187 to 195 and 203 to 216; these read RKRRVRDNV and RTIG…NKRS. The interval 249-256 is promoter-binding site; the sequence is RGFVYFVE. The 198-residue stretch at 286–483 folds into the RdRp catalytic domain; it reads VRKMMTNSQD…GINMSKKKSY (198 aa).

It belongs to the influenza viruses polymerase PB1 family. As to quaternary structure, influenza RNA polymerase is composed of three subunits: PB1, PB2 and PA. Interacts (via N-terminus) with PA (via C-terminus). Interacts (via C-terminus) with PB2 (via N-terminus); this interaction is essential for transcription initiation. Interacts (via C-terminus) with human PKP2 (via N-terminus); the interaction competitively inhibits the interaction between the RNA polymerase subunits PB1 and PB2. In terms of processing, phosphorylated by host PRKCA.

Its subcellular location is the host nucleus. It localises to the host cytoplasm. The enzyme catalyses RNA(n) + a ribonucleoside 5'-triphosphate = RNA(n+1) + diphosphate. RNA-dependent RNA polymerase which is responsible for replication and transcription of virus RNA segments. The transcription of viral mRNAs occurs by a unique mechanism called cap-snatching. 5' methylated caps of cellular mRNAs are cleaved after 10-13 nucleotides by PA. In turn, these short capped RNAs are used as primers by PB1 for transcription of viral mRNAs. During virus replication, PB1 initiates RNA synthesis and copy vRNA into complementary RNA (cRNA) which in turn serves as a template for the production of more vRNAs. The chain is RNA-directed RNA polymerase catalytic subunit from Influenza A virus (strain A/India/6263/1980 H1N1).